A 419-amino-acid polypeptide reads, in one-letter code: UDP-N-acetylglucosamine 1-carboxyvinyltransferase 2 (419 aa).

24 to 25 (KN) is a binding site for phosphoenolpyruvate. R94 contributes to the UDP-N-acetyl-alpha-D-glucosamine binding site. Residue C118 is the Proton donor of the active site. A 2-(S-cysteinyl)pyruvic acid O-phosphothioketal modification is found at C118. Residues 123 to 127 (RPIDQ), D307, and I329 each bind UDP-N-acetyl-alpha-D-glucosamine.

The protein belongs to the EPSP synthase family. MurA subfamily.

The protein localises to the cytoplasm. The enzyme catalyses phosphoenolpyruvate + UDP-N-acetyl-alpha-D-glucosamine = UDP-N-acetyl-3-O-(1-carboxyvinyl)-alpha-D-glucosamine + phosphate. It functions in the pathway cell wall biogenesis; peptidoglycan biosynthesis. Its function is as follows. Cell wall formation. Adds enolpyruvyl to UDP-N-acetylglucosamine. This is UDP-N-acetylglucosamine 1-carboxyvinyltransferase 2 from Staphylococcus aureus (strain bovine RF122 / ET3-1).